Here is a 438-residue protein sequence, read N- to C-terminus: Putative truncated GMC-type inactive oxidoreductase L894 (438 aa).

An N-terminal signal peptide occupies residues 1–26 (MYVFLLFSRYKIFYVYIKKMAHRSRC). 79–109 (DIVIIGAGAAGCVLAYYLTKFSDLKIILLEA) contacts FAD.

This sequence belongs to the GMC oxidoreductase family. FAD is required as a cofactor.

It localises to the virion. The polypeptide is Putative truncated GMC-type inactive oxidoreductase L894 (Acanthamoeba polyphaga (Amoeba)).